A 730-amino-acid polypeptide reads, in one-letter code: Probable G-protein coupled receptor 149 (730 aa).

Residues 1–34 are Extracellular-facing; it reads MSFFLSNLTNDSRLWKVSHNSTDLMNSPETLTLS. N-linked (GlcNAc...) asparagine glycosylation is found at Asn7, Asn10, and Asn20. The helical transmembrane segment at 35–55 threads the bilayer; the sequence is LFCLICLMTLVALVGSIFSLV. Topologically, residues 56-68 are cytoplasmic; sequence SLLTMQYRTVVSM. A helical transmembrane segment spans residues 69–89; it reads LVTSWSVDDLLSVLSVAIFMV. At 90–108 the chain is on the extracellular side; that stretch reads LQWPREAPGYFQSLCTTSA. Residues Cys104 and Cys181 are joined by a disulfide bond. The chain crosses the membrane as a helical span at residues 109-131; it reads LLYMCQGLSSNLKATLIVFYNFY. At 132–148 the chain is on the cytoplasmic side; the sequence is TMHRTVVSQSSSWRSGQ. Residues 149–169 traverse the membrane as a helical segment; sequence VLGVALTVWAVSLLLASLPLC. Residues 170–188 lie on the Extracellular side of the membrane; sequence GWGVFVRTPWGCLTDCSSP. Residues 189–209 traverse the membrane as a helical segment; sequence YVLLLFAVYASAFGLLAVLSV. At 210–308 the chain is on the cytoplasmic side; that stretch reads PLTHQLLCSE…SFPVSLAQKR (99 aa). Residues 309-329 traverse the membrane as a helical segment; the sequence is FALILALTKVILWLPMMIHMV. Topologically, residues 330–340 are extracellular; it reads VKHVVGFQSLP. The chain crosses the membrane as a helical span at residues 341–361; the sequence is VDMLSFLLTLLASTVTPVFVL. Residues 362 to 730 are Cytoplasmic-facing; that stretch reads SKRWAHLPCG…RKREAESKGN (369 aa).

It belongs to the G-protein coupled receptor 1 family. As to expression, expressed exclusively in brain and testis.

It localises to the cell membrane. Orphan receptor. The sequence is that of Probable G-protein coupled receptor 149 (Gpr149) from Rattus norvegicus (Rat).